Here is a 412-residue protein sequence, read N- to C-terminus: MRDIETIDTLNQLNIDLQGDVSSPLGFIAGGLHCGLRRKKVDFGWIYSTTPATATGVYTLNQFKAAPLKLTEDSINKDKALQAIIVNSAIANACTGEKGMQDALDTQAWIAEQLNIEQHLVGVASTGVIGSFLPMDKIQYATQHVLKEQYNKSEAFNQAILTTDTMTKHLSVKVEIDGTTVTIGGTAKGSGMIHPNMATMLGFITTDANIDANTLDYCLKQSIDQSFNMITVDGDSSTNDMVLCMANGQAQHTQIDALHPEWHKFVYALNFVCHYLAKSIAKDGEGATKLVTVKVKGAHDVVEARKIAKSIVSSNLVKTAVHGEDANFGRIVTAIGYASRYIEPSATHVSLCQVSVLEKGMAVDFDEQRLKEELASDNILIEATVGNGEGEAAAYGCDLSYEYVRINASYRT.

Substrate-binding residues include T162, K188, T199, E285, N407, and T412. The Nucleophile role is filled by T199.

The protein belongs to the ArgJ family. In terms of assembly, heterotetramer of two alpha and two beta chains.

The protein localises to the cytoplasm. It catalyses the reaction N(2)-acetyl-L-ornithine + L-glutamate = N-acetyl-L-glutamate + L-ornithine. The catalysed reaction is L-glutamate + acetyl-CoA = N-acetyl-L-glutamate + CoA + H(+). Its pathway is amino-acid biosynthesis; L-arginine biosynthesis; L-ornithine and N-acetyl-L-glutamate from L-glutamate and N(2)-acetyl-L-ornithine (cyclic): step 1/1. It functions in the pathway amino-acid biosynthesis; L-arginine biosynthesis; N(2)-acetyl-L-ornithine from L-glutamate: step 1/4. Catalyzes two activities which are involved in the cyclic version of arginine biosynthesis: the synthesis of N-acetylglutamate from glutamate and acetyl-CoA as the acetyl donor, and of ornithine by transacetylation between N(2)-acetylornithine and glutamate. This is Arginine biosynthesis bifunctional protein ArgJ from Staphylococcus saprophyticus subsp. saprophyticus (strain ATCC 15305 / DSM 20229 / NCIMB 8711 / NCTC 7292 / S-41).